A 380-amino-acid chain; its full sequence is Chaperone protein DnaJ (380 aa).

The J domain occupies 5 to 70; it reads DYYEVLGVER…SKRAAYDQYG (66 aa). The CR-type zinc finger occupies 139-217; it reads GTTVNIRVPT…CHGEGRVEES (79 aa). Positions 152, 155, 169, 172, 191, 194, 205, and 208 each coordinate Zn(2+). 4 CXXCXGXG motif repeats span residues 152–159, 169–176, 191–198, and 205–212; these read CKPCDGSG, CPTCGGIG, CPRCHGHG, and CDSCHGEG.

The protein belongs to the DnaJ family. As to quaternary structure, homodimer. Zn(2+) is required as a cofactor.

The protein localises to the cytoplasm. In terms of biological role, participates actively in the response to hyperosmotic and heat shock by preventing the aggregation of stress-denatured proteins and by disaggregating proteins, also in an autonomous, DnaK-independent fashion. Unfolded proteins bind initially to DnaJ; upon interaction with the DnaJ-bound protein, DnaK hydrolyzes its bound ATP, resulting in the formation of a stable complex. GrpE releases ADP from DnaK; ATP binding to DnaK triggers the release of the substrate protein, thus completing the reaction cycle. Several rounds of ATP-dependent interactions between DnaJ, DnaK and GrpE are required for fully efficient folding. Also involved, together with DnaK and GrpE, in the DNA replication of plasmids through activation of initiation proteins. The chain is Chaperone protein DnaJ from Pseudomonas syringae pv. tomato (strain ATCC BAA-871 / DC3000).